Consider the following 288-residue polypeptide: MAEKKQWHETLHDQFGQYFAVDNVLYHEKTDHQDLIIFENAAFGRVMALDGVVQTTERDEFIYHEMMTHVPLLAHGHAKHVLIIGGGDGAMLREVTRHKNVESITMVEIDAGIVSFCRQYLPNHNAGSYDDPRFKLVIDDGVNFVNQTSQTFDVIISDCTDPIGPGESLFTSAFYEGCKRCLNPGGIFVAQNGVCFLQQEEAIDSYRKLSHYFSDVGFYQAAIPTYYGGIMTFAWATDNDALRHLSTEIIQARFLASGLKCRYYNPAIHTAAFALPQYLQDALASQPS.

Residues 9–238 (ETLHDQFGQY…GIMTFAWATD (230 aa)) form the PABS domain. Glutamine 33 contacts S-methyl-5'-thioadenosine. Positions 64 and 88 each coordinate spermidine. S-methyl-5'-thioadenosine is bound by residues glutamate 108 and 140–141 (DG). Residue aspartate 158 is the Proton acceptor of the active site. Spermidine is bound at residue 158–161 (DCTD). Proline 165 lines the S-methyl-5'-thioadenosine pocket.

This sequence belongs to the spermidine/spermine synthase family. Homodimer or homotetramer.

Its subcellular location is the cytoplasm. It catalyses the reaction S-adenosyl 3-(methylsulfanyl)propylamine + putrescine = S-methyl-5'-thioadenosine + spermidine + H(+). Its pathway is amine and polyamine biosynthesis; spermidine biosynthesis; spermidine from putrescine: step 1/1. Catalyzes the irreversible transfer of a propylamine group from the amino donor S-adenosylmethioninamine (decarboxy-AdoMet) to putrescine (1,4-diaminobutane) to yield spermidine. The sequence is that of Polyamine aminopropyltransferase from Shigella sonnei (strain Ss046).